The primary structure comprises 383 residues: Protein FAM217B (383 aa).

Disordered regions lie at residues 1 to 70, 89 to 115, 200 to 222, 232 to 251, 284 to 325, and 338 to 383; these read MNAG…CQGA, ADED…PPDL, KAKG…KSPG, SKPL…RKKA, QTLE…HIRV, and SCKA…YKLK. A compositionally biased stretch (polar residues) spans 8–43; it reads NKVQHSKNSSGKRQSKSQVPHASSQPRSSLTAVTQP. Residues 44-56 show a composition bias toward basic and acidic residues; the sequence is TEEKLKESISPEA. The span at 374–383 shows a compositional bias: polar residues; the sequence is GVKQNTYKLK.

The protein belongs to the FAM217 family.

The chain is Protein FAM217B (FAM217B) from Homo sapiens (Human).